The chain runs to 425 residues: tRNA(Ile)-lysidine synthase (425 aa).

27 to 32 (SGGLDS) lines the ATP pocket.

Belongs to the tRNA(Ile)-lysidine synthase family.

Its subcellular location is the cytoplasm. The enzyme catalyses cytidine(34) in tRNA(Ile2) + L-lysine + ATP = lysidine(34) in tRNA(Ile2) + AMP + diphosphate + H(+). Its function is as follows. Ligates lysine onto the cytidine present at position 34 of the AUA codon-specific tRNA(Ile) that contains the anticodon CAU, in an ATP-dependent manner. Cytidine is converted to lysidine, thus changing the amino acid specificity of the tRNA from methionine to isoleucine. This is tRNA(Ile)-lysidine synthase from Streptococcus pneumoniae serotype 19F (strain G54).